The chain runs to 414 residues: MEQQQRYISVLDIGTSKVLALIGEVQDDDKINIVGLGQAPSRGLRAGMVTNIDATVQAIRQAVNDAELMADTKITHVTTGIAGNHIRSLNSQGVVKIKDGEVTQADIDRAIETAKAINIPPDQKILDAVVQDYIIDTQLGVREPIGMSGVRLDTRVHIITGASTAVQNVQKCIERCGLKSDQIMLQPLASGQAVLTEDEKDLGVCVIDIGGGTTDIAVYMNGAIRHTSVIPAGGNLITKDLSKSLRTPLDAAEYIKIHYGVASCDTEGLGEMIEVPGVGDRTSRQVSSKVLAAIISARIQEIFGVVLGELQKSGFPKEVLNAGIVLTGGVSMMTGIVEFAEKIFDLPVRTGAPQEMGGLSDRVRTPRFSTAIGLLHAACKLEGNLPQPENGAVQEREGGGGLLARLKRWIENSF.

This sequence belongs to the FtsA/MreB family. As to quaternary structure, self-interacts. Interacts with FtsZ.

It localises to the cell inner membrane. Functionally, cell division protein that is involved in the assembly of the Z ring. May serve as a membrane anchor for the Z ring. The protein is Cell division protein FtsA of Neisseria meningitidis serogroup B (strain ATCC BAA-335 / MC58).